Reading from the N-terminus, the 658-residue chain is DNA mismatch repair protein MutL (658 aa).

A compositionally biased stretch (basic and acidic residues) spans Arg114–Lys130. Disordered regions lie at residues Arg114–Ala137 and Asp369–Met391.

It belongs to the DNA mismatch repair MutL/HexB family.

Functionally, this protein is involved in the repair of mismatches in DNA. It is required for dam-dependent methyl-directed DNA mismatch repair. May act as a 'molecular matchmaker', a protein that promotes the formation of a stable complex between two or more DNA-binding proteins in an ATP-dependent manner without itself being part of a final effector complex. The protein is DNA mismatch repair protein MutL of Neisseria meningitidis serogroup C (strain 053442).